The following is a 320-amino-acid chain: Malate dehydrogenase (320 aa).

Residues 10–15 (GSGMIG) and Asp-34 each bind NAD(+). 2 residues coordinate substrate: Arg-83 and Arg-89. NAD(+) is bound by residues Asn-96 and 119–121 (ITN). Residues Asn-121 and Arg-152 each coordinate substrate. His-176 serves as the catalytic Proton acceptor.

Belongs to the LDH/MDH superfamily. MDH type 3 family.

The enzyme catalyses (S)-malate + NAD(+) = oxaloacetate + NADH + H(+). Functionally, catalyzes the reversible oxidation of malate to oxaloacetate. The polypeptide is Malate dehydrogenase (Bartonella quintana (strain Toulouse) (Rochalimaea quintana)).